The sequence spans 360 residues: UDP-N-acetylglucosamine--N-acetylmuramyl-(pentapeptide) pyrophosphoryl-undecaprenol N-acetylglucosamine transferase (360 aa).

Residues Thr-12–Gly-14, Ser-198, and Gln-289 each bind UDP-N-acetyl-alpha-D-glucosamine.

It belongs to the glycosyltransferase 28 family. MurG subfamily.

Its subcellular location is the cell membrane. It carries out the reaction Mur2Ac(oyl-L-Ala-gamma-D-Glu-L-Lys-D-Ala-D-Ala)-di-trans,octa-cis-undecaprenyl diphosphate + UDP-N-acetyl-alpha-D-glucosamine = beta-D-GlcNAc-(1-&gt;4)-Mur2Ac(oyl-L-Ala-gamma-D-Glu-L-Lys-D-Ala-D-Ala)-di-trans,octa-cis-undecaprenyl diphosphate + UDP + H(+). It functions in the pathway cell wall biogenesis; peptidoglycan biosynthesis. Its function is as follows. Cell wall formation. Catalyzes the transfer of a GlcNAc subunit on undecaprenyl-pyrophosphoryl-MurNAc-pentapeptide (lipid intermediate I) to form undecaprenyl-pyrophosphoryl-MurNAc-(pentapeptide)GlcNAc (lipid intermediate II). The protein is UDP-N-acetylglucosamine--N-acetylmuramyl-(pentapeptide) pyrophosphoryl-undecaprenol N-acetylglucosamine transferase of Streptococcus equi subsp. zooepidemicus (strain MGCS10565).